The sequence spans 480 residues: UDP-N-acetylmuramate--L-alanine ligase (480 aa).

126–132 (GTHGKTT) is a binding site for ATP.

This sequence belongs to the MurCDEF family.

It is found in the cytoplasm. The catalysed reaction is UDP-N-acetyl-alpha-D-muramate + L-alanine + ATP = UDP-N-acetyl-alpha-D-muramoyl-L-alanine + ADP + phosphate + H(+). It participates in cell wall biogenesis; peptidoglycan biosynthesis. Functionally, cell wall formation. In Blochmanniella pennsylvanica (strain BPEN), this protein is UDP-N-acetylmuramate--L-alanine ligase.